Reading from the N-terminus, the 132-residue chain is Vacuolar protein sorting-associated protein 55 homolog (132 aa).

4 helical membrane-spanning segments follow: residues valine 7–leucine 27, threonine 32–alanine 52, leucine 68–alanine 88, and cysteine 98–leucine 118.

It belongs to the OB-RGRP/VPS55 family.

Its subcellular location is the endosome membrane. Functionally, involved in endosomal protein transport. In Caenorhabditis elegans, this protein is Vacuolar protein sorting-associated protein 55 homolog.